The sequence spans 518 residues: uncharacterized protein (518 aa).

The N-terminal stretch at methionine 1–glycine 21 is a signal peptide. Residues asparagine 30, asparagine 142, asparagine 295, asparagine 342, asparagine 362, asparagine 410, and asparagine 503 are each glycosylated (N-linked (GlcNAc...) asparagine). The CUB domain occupies cysteine 389–glutamine 517.

The protein localises to the secreted. This is an uncharacterized protein from Caenorhabditis elegans.